Here is a 440-residue protein sequence, read N- to C-terminus: Glucoside xylosyltransferase 1 (440 aa).

Residues 1-6 (MRRYLR) are Cytoplasmic-facing. A helical; Signal-anchor for type II membrane protein membrane pass occupies residues 7 to 29 (VVVLCVACGFCSLLYAFSQLAVS). Topologically, residues 30–440 (LEEGTGGGGG…DRYARSPKEK (411 aa)) are lumenal. N-linked (GlcNAc...) asparagine glycosylation is found at asparagine 173, asparagine 237, and asparagine 278.

The protein belongs to the glycosyltransferase 8 family.

The protein resides in the membrane. It catalyses the reaction 3-O-(beta-D-glucosyl)-L-seryl-[EGF-like domain protein] + UDP-alpha-D-xylose = 3-O-[alpha-D-xylosyl-(1-&gt;3)-beta-D-glucosyl]-L-seryl-[EGF-like domain protein] + UDP + H(+). In terms of biological role, glycosyltransferase which elongates the O-linked glucose attached to EGF-like repeats in the extracellular domain of Notch proteins by catalyzing the addition of xylose. The chain is Glucoside xylosyltransferase 1 (GXYLT1) from Homo sapiens (Human).